Here is a 320-residue protein sequence, read N- to C-terminus: Cytochrome f (320 aa).

Positions 1–35 (MEKRNTYDWVTRWVIASFSILTISYMITWTSISNA) are cleaved as a signal peptide. The heme site is built by Tyr-36, Cys-56, Cys-59, and His-60. The helical transmembrane segment at 286 to 306 (IQGLLVFLASVVLAQIFLVLK) threads the bilayer.

The protein belongs to the cytochrome f family. The 4 large subunits of the cytochrome b6-f complex are cytochrome b6, subunit IV (17 kDa polypeptide, petD), cytochrome f and the Rieske protein, while the 4 small subunits are PetG, PetL, PetM and PetN. The complex functions as a dimer. Heme serves as cofactor.

It localises to the plastid. It is found in the chloroplast thylakoid membrane. In terms of biological role, component of the cytochrome b6-f complex, which mediates electron transfer between photosystem II (PSII) and photosystem I (PSI), cyclic electron flow around PSI, and state transitions. The polypeptide is Cytochrome f (Welwitschia mirabilis (Tree tumbo)).